The following is a 209-amino-acid chain: Small ribosomal subunit protein uS4 (209 aa).

The region spanning 99 to 161 (CRLDNIAFRL…SSKLVVVEMG (63 aa)) is the S4 RNA-binding domain.

Belongs to the universal ribosomal protein uS4 family. As to quaternary structure, part of the 30S ribosomal subunit. Contacts protein S5. The interaction surface between S4 and S5 is involved in control of translational fidelity.

Its function is as follows. One of the primary rRNA binding proteins, it binds directly to 16S rRNA where it nucleates assembly of the body of the 30S subunit. Functionally, with S5 and S12 plays an important role in translational accuracy. The chain is Small ribosomal subunit protein uS4 from Acidobacterium capsulatum (strain ATCC 51196 / DSM 11244 / BCRC 80197 / JCM 7670 / NBRC 15755 / NCIMB 13165 / 161).